The following is a 499-amino-acid chain: Glutamate--tRNA ligase (499 aa).

Positions 12–22 match the 'HIGH' region motif; the sequence is PSPTGHLHIGN. The 'KMSKS' region motif lies at 259–263; that stretch reads KLSKR. ATP is bound at residue Lys-262.

Belongs to the class-I aminoacyl-tRNA synthetase family. Glutamate--tRNA ligase type 1 subfamily. As to quaternary structure, monomer.

The protein resides in the cytoplasm. It catalyses the reaction tRNA(Glu) + L-glutamate + ATP = L-glutamyl-tRNA(Glu) + AMP + diphosphate. Its function is as follows. Catalyzes the attachment of glutamate to tRNA(Glu) in a two-step reaction: glutamate is first activated by ATP to form Glu-AMP and then transferred to the acceptor end of tRNA(Glu). This Lactobacillus gasseri (strain ATCC 33323 / DSM 20243 / BCRC 14619 / CIP 102991 / JCM 1131 / KCTC 3163 / NCIMB 11718 / NCTC 13722 / AM63) protein is Glutamate--tRNA ligase.